Reading from the N-terminus, the 314-residue chain is Ribosomal protein L11 methyltransferase (314 aa).

S-adenosyl-L-methionine contacts are provided by threonine 161, glycine 182, aspartate 204, and asparagine 248.

The protein belongs to the methyltransferase superfamily. PrmA family.

The protein localises to the cytoplasm. It catalyses the reaction L-lysyl-[protein] + 3 S-adenosyl-L-methionine = N(6),N(6),N(6)-trimethyl-L-lysyl-[protein] + 3 S-adenosyl-L-homocysteine + 3 H(+). In terms of biological role, methylates ribosomal protein L11. The chain is Ribosomal protein L11 methyltransferase from Listeria monocytogenes serotype 4b (strain CLIP80459).